A 126-amino-acid chain; its full sequence is Protein translocase subunit SecE (126 aa).

The next 3 membrane-spanning stretches (helical) occupy residues 18-38 (LKWVATFVLLVAAVVGNYLYG), 40-60 (LSVVARAAGVIVLIAAALGVA), and 97-117 (IVLAVSIVMALALWGIDGIMV).

This sequence belongs to the SecE/SEC61-gamma family. Component of the Sec protein translocase complex. Heterotrimer consisting of SecY, SecE and SecG subunits. The heterotrimers can form oligomers, although 1 heterotrimer is thought to be able to translocate proteins. Interacts with the ribosome. Interacts with SecDF, and other proteins may be involved. Interacts with SecA.

It localises to the cell inner membrane. Essential subunit of the Sec protein translocation channel SecYEG. Clamps together the 2 halves of SecY. May contact the channel plug during translocation. The polypeptide is Protein translocase subunit SecE (Vibrio cholerae serotype O1 (strain ATCC 39315 / El Tor Inaba N16961)).